Reading from the N-terminus, the 419-residue chain is Sphingomyelin phosphodiesterase 2 (419 aa).

Position 49 (Glu49) interacts with Mg(2+). Residue His272 is the Proton acceptor of the active site. A run of 2 helical transmembrane segments spans residues 326–346 (FSGY…VLAA) and 354–374 (AIIL…VYLF).

Belongs to the neutral sphingomyelinase family. Mg(2+) is required as a cofactor. As to expression, although widely expressed in all tissues examined, except the spleen, high enzymatic activity occurs only in the brain.

It is found in the cell membrane. The catalysed reaction is a sphingomyelin + H2O = phosphocholine + an N-acylsphing-4-enine + H(+). The enzyme catalyses an N-(acyl)-sphingosylphosphocholine + H2O = an N-acyl-sphingoid base + phosphocholine + H(+). It carries out the reaction 1-O-octadecyl-sn-glycero-3-phosphocholine + H2O = 1-O-octadecyl-sn-glycerol + phosphocholine + H(+). It catalyses the reaction 1-hexadecanoyl-sn-glycero-3-phosphocholine + H2O = 1-hexadecanoyl-sn-glycerol + phosphocholine + H(+). The catalysed reaction is a sphingosylphosphocholine + H2O = a sphingoid base + phosphocholine + H(+). The enzyme catalyses 1-O-hexadecyl-sn-glycero-3-phosphocholine + H2O = 1-O-hexadecyl-sn-glycerol + phosphocholine + H(+). It functions in the pathway lipid metabolism; sphingolipid metabolism. Its activity is regulated as follows. Activated by arachidonic acid. Its function is as follows. Catalyzes, at least in vitro, the hydrolysis of sphingomyelin to form ceramide and phosphocholine. Also hydrolyzes 1-O-alkyl-2-lyso-sn-glycero-3-phosphocholine (lyso-platelet-activating factor) in vivo. Also acts on 1-acyl-2-lyso-sn-glycero-3-phosphocholine (lyso-PC) and sphingosylphosphocholine. The sequence is that of Sphingomyelin phosphodiesterase 2 from Mus musculus (Mouse).